The following is an 868-amino-acid chain: Alanine--tRNA ligase (868 aa).

His553, His557, Cys657, and His661 together coordinate Zn(2+). The tract at residues 831–851 is disordered; sequence GGKGGGRADMAQAGGSRPQAL.

It belongs to the class-II aminoacyl-tRNA synthetase family. It depends on Zn(2+) as a cofactor.

The protein resides in the cytoplasm. It carries out the reaction tRNA(Ala) + L-alanine + ATP = L-alanyl-tRNA(Ala) + AMP + diphosphate. Its function is as follows. Catalyzes the attachment of alanine to tRNA(Ala) in a two-step reaction: alanine is first activated by ATP to form Ala-AMP and then transferred to the acceptor end of tRNA(Ala). Also edits incorrectly charged Ser-tRNA(Ala) and Gly-tRNA(Ala) via its editing domain. The protein is Alanine--tRNA ligase of Chromohalobacter salexigens (strain ATCC BAA-138 / DSM 3043 / CIP 106854 / NCIMB 13768 / 1H11).